An 80-amino-acid chain; its full sequence is Kappa-actitoxin-Avd4i (80 aa).

The signal sequence occupies residues 1 to 19 (MNKALFLCLVVLCAAVVFA). Positions 20–31 (AEDLQKAKHAPF) are excised as a propeptide. 3 disulfide bridges follow: Cys-41–Cys-76, Cys-43–Cys-69, and Cys-59–Cys-77.

Belongs to the sea anemone type 3 (BDS) potassium channel toxin family. Weakly expressed in the ectodermal tissue from the distal and proximal tentacles, body wall, and oral disk.

It is found in the secreted. Its subcellular location is the nematocyst. Blocks Kv3 voltage-gated potassium channels. Reduces blood pressure. The chain is Kappa-actitoxin-Avd4i from Anemonia viridis (Snakelocks anemone).